Reading from the N-terminus, the 320-residue chain is ATP-dependent 6-phosphofructokinase (320 aa).

G12 contacts ATP. ADP contacts are provided by residues 22-26 (RGVVR) and 55-60 (RYSVSD). Residues 73–74 (RF) and 103–106 (GDGS) contribute to the ATP site. D104 is a Mg(2+) binding site. A substrate-binding site is contributed by 126–128 (TID). D128 acts as the Proton acceptor in catalysis. R155 contacts ADP. Residues R163 and 170–172 (MGR) each bind substrate. ADP is bound by residues 186–188 (GCE), K212, and 214–216 (KKH). Substrate contacts are provided by residues E223, R244, and 250 to 253 (HIQR).

This sequence belongs to the phosphofructokinase type A (PFKA) family. ATP-dependent PFK group I subfamily. Prokaryotic clade 'B1' sub-subfamily. As to quaternary structure, homotetramer. It depends on Mg(2+) as a cofactor.

The protein localises to the cytoplasm. The enzyme catalyses beta-D-fructose 6-phosphate + ATP = beta-D-fructose 1,6-bisphosphate + ADP + H(+). The protein operates within carbohydrate degradation; glycolysis; D-glyceraldehyde 3-phosphate and glycerone phosphate from D-glucose: step 3/4. With respect to regulation, allosterically activated by ADP and other diphosphonucleosides, and allosterically inhibited by phosphoenolpyruvate. Catalyzes the phosphorylation of D-fructose 6-phosphate to fructose 1,6-bisphosphate by ATP, the first committing step of glycolysis. The polypeptide is ATP-dependent 6-phosphofructokinase (Escherichia fergusonii (strain ATCC 35469 / DSM 13698 / CCUG 18766 / IAM 14443 / JCM 21226 / LMG 7866 / NBRC 102419 / NCTC 12128 / CDC 0568-73)).